Consider the following 344-residue polypeptide: Serine/arginine-rich splicing factor 6 (344 aa).

The RRM 1 domain maps to 1–72 (MPRVYIGRLS…ERVIVEHARG (72 aa)). Residues Ser45, Ser81, and Ser84 each carry the phosphoserine modification. The disordered stretch occupies residues 75 to 103 (RDRDGYSYGSRSGGGGYSSRRTSGRDKYG). Residues 110-183 (YRLIVENLSS…RNIRLIEDKP (74 aa)) form the RRM 2 domain. Position 165 is an N6-acetyllysine (Lys165). The segment at 176–344 (IRLIEDKPRT…RSRSRSSSRD (169 aa)) is disordered. Lys182 participates in a covalent cross-link: Glycyl lysine isopeptide (Lys-Gly) (interchain with G-Cter in SUMO2). Positions 185 to 250 (TSHRRSYSGS…RKSRSKSKSK (66 aa)) are enriched in basic residues. Basic and acidic residues-rich tracts occupy residues 264–273 (RSKDEYEKSR) and 280–291 (SPKENGKGDIKS). Ser297 and Ser299 each carry phosphoserine. Position 303 is a phosphoserine; by DYRK1A (Ser303). Ser314 and Ser316 each carry phosphoserine. Basic residues predominate over residues 322–344 (ATSRSRSRSRSKSRSRSRSSSRD).

This sequence belongs to the splicing factor SR family. In terms of assembly, binds SREK1/SFRS12. Interacts with DYRK1A. In terms of processing, extensively phosphorylated on serine residues in the RS domain. Phosphorylated by DYRK1A, probably in the RS domain. Phosphorylation by DYRK1A modulates alternative splice site selection and inhibits the expression of MAPT/Tau exon 10.

The protein resides in the nucleus. The protein localises to the nucleus speckle. Plays a role in constitutive splicing and modulates the selection of alternative splice sites. Plays a role in the alternative splicing of MAPT/Tau exon 10. Binds to alternative exons of TNC pre-mRNA and promotes the expression of alternatively spliced TNC. Plays a role in wound healing and in the regulation of keratinocyte differentiation and proliferation via its role in alternative splicing. This is Serine/arginine-rich splicing factor 6 (SRSF6) from Homo sapiens (Human).